Here is a 66-residue protein sequence, read N- to C-terminus: Large ribosomal subunit protein bL33c (66 aa).

The protein belongs to the bacterial ribosomal protein bL33 family.

It is found in the plastid. Its subcellular location is the chloroplast. The sequence is that of Large ribosomal subunit protein bL33c from Nasturtium officinale (Watercress).